The sequence spans 353 residues: Histidinol-phosphate aminotransferase (353 aa).

Lysine 211 carries the post-translational modification N6-(pyridoxal phosphate)lysine.

The protein belongs to the class-II pyridoxal-phosphate-dependent aminotransferase family. Histidinol-phosphate aminotransferase subfamily. Homodimer. It depends on pyridoxal 5'-phosphate as a cofactor.

The enzyme catalyses L-histidinol phosphate + 2-oxoglutarate = 3-(imidazol-4-yl)-2-oxopropyl phosphate + L-glutamate. It participates in amino-acid biosynthesis; L-histidine biosynthesis; L-histidine from 5-phospho-alpha-D-ribose 1-diphosphate: step 7/9. The polypeptide is Histidinol-phosphate aminotransferase (Marinomonas sp. (strain MWYL1)).